Here is a 139-residue protein sequence, read N- to C-terminus: LIKQPVVGTTHVEMPRNEVLEQHLTSHGAQIAGGGAAGDYFKSPTSARTLIPLTASCLRPDGVFQLGGGSRSSFNPLQTDFAFHALPSRPRHGGIGSRQFVEEFVPAVYLNPYSGPPDSYPDQFIRHYNVYSNSVSGYS.

Residues glycine 35–glycine 69 constitute a propeptide that is removed on maturation.

The protein belongs to the adenoviridae hexon-linking protein family. In terms of assembly, interacts with the peripentonal hexons as well as the hexons in the facets. Part of a complex composed of the core-capsid bridging protein, the endosome lysis protein VI and the hexon-linking protein VIII; these interactions bridge the virus core to the capsid. Post-translationally, cleaved by the viral protease during virion maturation. May cause the middle segment to be shed from the capsid.

The protein localises to the host nucleus. It localises to the virion. In terms of biological role, structural component of the virion that acts as a cement protein on the capsid interior and which glue the peripentonal hexons and group-of-nine hexons together. This Bovine adenovirus B serotype 3 (BAdV-3) protein is Pre-hexon-linking protein VIII.